Here is a 319-residue protein sequence, read N- to C-terminus: Transaldolase (319 aa).

Catalysis depends on Lys-132, which acts as the Schiff-base intermediate with substrate.

The protein belongs to the transaldolase family. Type 1 subfamily. Homodimer.

The protein localises to the cytoplasm. The catalysed reaction is D-sedoheptulose 7-phosphate + D-glyceraldehyde 3-phosphate = D-erythrose 4-phosphate + beta-D-fructose 6-phosphate. Its pathway is carbohydrate degradation; pentose phosphate pathway; D-glyceraldehyde 3-phosphate and beta-D-fructose 6-phosphate from D-ribose 5-phosphate and D-xylulose 5-phosphate (non-oxidative stage): step 2/3. Its function is as follows. Transaldolase is important for the balance of metabolites in the pentose-phosphate pathway. The chain is Transaldolase from Alteromonas mediterranea (strain DSM 17117 / CIP 110805 / LMG 28347 / Deep ecotype).